The sequence spans 823 residues: MHDVWRTILSRFKQNTNAIKTRFDKYRALCKELGLQRDEWSESIFLDDLEKLLKLTAKFEMALMPSNGVDTHVNGVITKINGFNNGFDTHINGFDTRINGFHTHTNGFDRGLELWQIEERYRALAQLQSTLGSFFERACPGYDQSKIPWFFDPSYYQCQGVNYDRFASPDVRDREQQLLETLQLGSNQNPKLLLMSSGMASFTVIQQYVVQQLNYGDTVVVSPYIYFESFQPMRSQKSLTVVNAKGFDPESIIEAAERNNARAVFLDPMCNTVGLDTIDIRRFAHLVANRGGWADRLVIVDGTLVSGGMQLYDWFDGPHCPKVLYYESAHKYIQLGLDLIMCGYVVMPEDLVPAIQLIRQITGTVLYSRNASLLPPIDKTIFNFRMSRLTTNAEKLHRLLDAESRNMAEVTFPHHWRDYRWRHGGNVVTVRFHGEGLNKRSNLERCCDDILRAAEEEGVQMVKGASLGFSTTRIFVADAFFENTDPFLRISVGVQSEDIETVARAVLSGIKRYCMSAVPVNLDVGQRLYDAKFYIAMASMLEVRARYAKDRVVFMEGEWLVPILKALGAREEDFDALQQVSHHLGKDPTVDYRTIRNGLFYFNFENKAIQRFQKQRFTLTVQENYKRHDSGLPRDFPEVRGDLQYNTVLQALMVAKAFIMNKVDVEPRAHLDYSSPNFLCNVFNIRTFTEKNILGEPTLEGVHADGADHTMTTFLGCTNMRSDSGITFIHDQKEITGIPATEAQPSLIKHRFQHRHFLDSLLFADNEAKHSLTSVFQEDVSKRATRDMLLFLTRKPKLAGHSSGSVDAMEPHKTLPMNVPLWL.

Residues 56–535 (TAKFEMALMP…QRLYDAKFYI (480 aa)) form a pyridoxal 5'-phosphate-dependent lyase region. Residue lysine 331 is modified to N6-(pyridoxal phosphate)lysine. The interval 573–823 (DFDALQQVSH…TLPMNVPLWL (251 aa)) is alpha-ketoglutarate-dependent oxygenase. Fe cation is bound by residues histidine 703 and aspartate 705.

In the N-terminal section; belongs to the trans-sulfuration enzymes family. The protein in the C-terminal section; belongs to the iron/ascorbate-dependent oxidoreductase family. Requires pyridoxal 5'-phosphate as cofactor. Fe(2+) serves as cofactor.

The enzyme catalyses O-acetyl-L-homoserine + 3-methyl-2-oxobutanoate = (6S)-6-amino-3,3-dimethyl-2-oxoheptanedioate + acetate + H(+). It catalyses the reaction (6S)-3,3-dimethylpiperidine-2,6-dicarboxylate + 2-oxoglutarate + AH2 + O2 + H(+) = (2S)-5,5-dimethylpiperidine-2-carboxylate + succinate + A + 2 CO2 + H2O. Its pathway is secondary metabolite biosynthesis; terpenoid biosynthesis. In terms of biological role, bifunctional enzyme; part of the gene cluster that mediates the biosynthesis of flavunoidine, an alkaloidal terpenoid with a tetracyclic cage-like core connected to dimethylcadaverine via a C-N bond and acylated with 5,5-dimethyl-L-pipecolate. The tetracyclic core is synthesized by the terpene cyclase flvE and the cytochrome P450 monooxygenase flvD. The terpene cyclase flvE catalyzes the cyclization of farnesyl pyrophosphate (FPP) to form (1R,4R,5S)-(+)-acoradiene and the cytochrome P450 monooxygenase flvD is then responsible for oxidative conversion of (1R,4R,5S)-(+)-acoradiene into the tetracyclic cage present in the final product flavunoidine. In parallel, the N-methyltransferase flvH dimethylates L-lysine to give N,N-dimethyl-L-Lysin which is decarboxylated by flvG to afford dimethylcadaverine. The terpene cyclase-like protein flvF is the enzyme that attaches the dimethylcadaverine precusor at the C-7 of the tetracyclic cage to yield pre-flavunoidine. The cytochrome monooxygenase flvC hydroxylates the C-10 position of pre-flavunoidine whereas the NRPS flvI acylates the terpenoid core at the hydroxylated C-10 with dimethylpipecolate to yield final flavunoidine. The bifunctional enzyme flvA and the dehydrogenase flvB are responsible for the synthesis of the dimethylpipecolate precursor. The PLP-dependent lyase domain of flvA might use L-O-acetyl-homoserine and alpha-keto-isovalerate to form an intermediary ketone that can cyclize intramolecularly to yield an imine. The imine can be reduced by flvB to yield the 6-carboxylated pipecolate. The C-terminal alpha-KG-dependent oxygenase domain of flvA is then proposed to catalyze the decarboxylation to yield dimethylpipecolate. The polypeptide is Bifunctional enzyme flvA (Aspergillus flavus (strain ATCC 200026 / FGSC A1120 / IAM 13836 / NRRL 3357 / JCM 12722 / SRRC 167)).